Consider the following 499-residue polypeptide: BTB/POZ domain-containing protein 16 (499 aa).

Residues 143-199 (INDPLVTREAFATALKNLYMQEVKICLDDVLGVLAAAHILQFGSLFQRCVTVMMSGL) enclose the BTB domain.

This chain is BTB/POZ domain-containing protein 16 (BTBD16), found in Bos taurus (Bovine).